The chain runs to 62 residues: Chymotrypsin inhibitor SCI-I (62 aa).

A BPTI/Kunitz inhibitor domain is found at 9–60 (CEQAFGNSGPCFAYIKLYSYNQKTKKCEEFIYGGCQGNDNRFITLAECEQKC). Intrachain disulfides connect C9-C60, C19-C43, and C35-C56.

Its function is as follows. Inhibits chymotrypsin and thus avoids the accidental chymotrypsin-mediated activation of prophenoloxidase. This enzyme is required by the insect immune system to produce melanin which is used to engulf foreign objects. The chain is Chymotrypsin inhibitor SCI-I from Bombyx mori (Silk moth).